The primary structure comprises 240 residues: Ribosomal RNA small subunit methyltransferase G (240 aa).

S-adenosyl-L-methionine contacts are provided by residues Gly-80, Phe-85, 131–132 (AE), and Arg-150.

Belongs to the methyltransferase superfamily. RNA methyltransferase RsmG family.

The protein resides in the cytoplasm. Functionally, specifically methylates the N7 position of a guanine in 16S rRNA. In Dictyoglomus thermophilum (strain ATCC 35947 / DSM 3960 / H-6-12), this protein is Ribosomal RNA small subunit methyltransferase G.